Reading from the N-terminus, the 279-residue chain is Gas vesicle protein L2 (279 aa).

This sequence belongs to the gas vesicle GvpF/GvpL family. GvpF to GvpM interact with each other in vitro, and may form multi-subunit complex(es). Interacts with GvpC, GvpN and GvpO.

The protein resides in the gas vesicle. Functionally, proteins GvpF to GvpM might be involved in nucleating gas vesicle formation. A minor component of the gas vesicle. Gas vesicles are hollow, gas filled proteinaceous nanostructures found in several microbial planktonic microorganisms. They allow positioning of halobacteria at the optimal depth for growth in the poorly aerated, shallow brine pools of their habitat. In terms of biological role, expression of 2 c-vac DNA fragments containing 2 divergently transcribed regions (gvpE-gvpF-gvpG-gvpH-gvpI-gvpJ-gvpK-gvpL-gvpM and gvpA-gvpC-gvpN-gvpO) allows H.volcanii to produce gas vesicles. The chain is Gas vesicle protein L2 from Halobacterium salinarum (strain ATCC 700922 / JCM 11081 / NRC-1) (Halobacterium halobium).